A 143-amino-acid chain; its full sequence is HTH-type transcriptional regulator BudR (143 aa).

The HTH lysR-type domain occupies 1–58 (MELRYLRYFVAVARERHFTRAAKALGISQPPLSQQIKRLEEEVGTPLFRRLTRGVELT). Positions 18–37 (FTRAAKALGISQPPLSQQIK) form a DNA-binding region, H-T-H motif.

The protein belongs to the LysR transcriptional regulatory family.

In terms of biological role, regulator of the budABC operon for 2,3-butanediol synthesis. The polypeptide is HTH-type transcriptional regulator BudR (budR) (Klebsiella aerogenes (Enterobacter aerogenes)).